A 228-amino-acid polypeptide reads, in one-letter code: Endo-1,4-beta-xylanase B (228 aa).

The first 19 residues, 1-19 (MVSFTYLLAAVSAVTGAVA), serve as a signal peptide directing secretion. The GH11 domain maps to 37–227 (KRTSPTTGVN…SSGQATMTVS (191 aa)). The Nucleophile role is filled by E122. Catalysis depends on E214, which acts as the Proton donor.

This sequence belongs to the glycosyl hydrolase 11 (cellulase G) family.

The protein localises to the secreted. The enzyme catalyses Endohydrolysis of (1-&gt;4)-beta-D-xylosidic linkages in xylans.. It functions in the pathway glycan degradation; xylan degradation. Inhibited by the proteinaceous endoxylanase inhibitor I from T.aestivum (TAXI-I). In terms of biological role, endo-1,4-beta-xylanase involved in the hydrolysis of xylan, a major structural heterogeneous polysaccharide found in plant biomass representing the second most abundant polysaccharide in the biosphere, after cellulose. Plays an important role in causing fusarium head blight (FHB) on cereal crops. Induces cell death and hydrogen peroxide accumulation in infected wheat leaves. The polypeptide is Endo-1,4-beta-xylanase B (XYLB) (Gibberella zeae (strain ATCC MYA-4620 / CBS 123657 / FGSC 9075 / NRRL 31084 / PH-1) (Wheat head blight fungus)).